A 270-amino-acid chain; its full sequence is MKFLEKLKQAGNSHNSLLCVGLDPDPKLMPVGMTALEFNREIIAATAPFVCGYKINLAFYEALGKQGWEILSETCKLIPPELLSIADAKRGDIGNTSKAYARAVFDELGCDGVTASPYLGYDSLEPFIEYQDKGIFILCRTSNQGSADFQMLKTEYLGQKRFLYEVVADKSLQWNRYENIGLVVGATQQEELKKLRLSYPKMPFLIPGIGAQGGDLKATVENGTNQSGQLALICASRGILYARSGSEFAQGAAEAAKQMRDAINHYRKRF.

Residue Lys-89 is the Proton donor of the active site.

Belongs to the OMP decarboxylase family. Type 2 subfamily.

The catalysed reaction is orotidine 5'-phosphate + H(+) = UMP + CO2. It participates in pyrimidine metabolism; UMP biosynthesis via de novo pathway; UMP from orotate: step 2/2. The chain is Orotidine 5'-phosphate decarboxylase from Dehalococcoides mccartyi (strain ATCC BAA-2266 / KCTC 15142 / 195) (Dehalococcoides ethenogenes (strain 195)).